The following is a 518-amino-acid chain: Histone deacetylase 1 (518 aa).

A histone deacetylase region spans residues 22–333 (RRVCYFYDAE…WCYETGVALG (312 aa)). His153 acts as the Proton donor/acceptor in catalysis. Zn(2+) is bound by residues Asp188, His190, and Asp276. Residues 387–518 (HAPSVQFQER…QDQPSVHQKT (132 aa)) are disordered. A compositionally biased stretch (acidic residues) spans 401-412 (ELPEQDEDQEDP). Residues 413-435 (DERHHADSDVEMDDVKPLDDSGR) show a composition bias toward basic and acidic residues. Positions 503 to 518 (DNSNKLQDQPSVHQKT) are enriched in polar residues.

This sequence belongs to the histone deacetylase family. HD Type 1 subfamily. Interacts with TPR3. The cofactor is Zn(2+). As to expression, expressed in roots and leaves.

The protein resides in the nucleus. It catalyses the reaction N(6)-acetyl-L-lysyl-[histone] + H2O = L-lysyl-[histone] + acetate. Functionally, responsible for the deacetylation of lysine residues on the N-terminal part of the core histones (H2A, H2B, H3 and H4). Histone deacetylation gives a tag for epigenetic repression and plays an important role in transcriptional regulation, cell cycle progression and developmental events. Histone deacetylases act via the formation of large multiprotein complexes. Negatively regulates the expression of the NAC48/NAC6 gene that controls root growth in seedlings. Epigenetically represses the expression of NAC48/NAC6 by deacetylating 'Lys-9' (H3K9ac), 'Lys-14' (H3K14ac) and 'Lys-18' (H3K18ac) of histone H3, and 'Lys-5' (H4K5ac), 'Lys-12' (H4K12ac) and 'Lys-16' (H4K16ac) of histone H4. Functions in the regulation of gene expression in the whole genome. Acts as a chromatin remodeling regulator to promote the formation of a repressive chromatin state. Functions with MODD via its interaction with TPR3, to down-regulates the histone acetylation level at BZIP46 target genes. BZIP46 is a positive regulator of abscisic acid (ABA) signaling and drought stress tolerance. In Oryza sativa subsp. japonica (Rice), this protein is Histone deacetylase 1.